Reading from the N-terminus, the 334-residue chain is Forkhead box protein N2 (334 aa).

Disordered regions lie at residues 1-52 and 83-108; these read MGPV…SGTT and SPLY…ASSK. A DNA-binding region (fork-head) is located at residues 108 to 204; that stretch reads KPPYSFSLLI…QALKKQPFSS (97 aa).

It is found in the nucleus. This chain is Forkhead box protein N2, found in Xenopus tropicalis (Western clawed frog).